The sequence spans 582 residues: Two-component response regulator ORR26 (582 aa).

One can recognise a Response regulatory domain in the interval 11–126 (RVLVVDDDPT…ELRNIWQHVY (116 aa)). Residue Asp62 is modified to 4-aspartylphosphate. A compositionally biased stretch (basic and acidic residues) spans 166-182 (SDTMRKRKDVDKDHADQ). The tract at residues 166-187 (SDTMRKRKDVDKDHADQESSDG) is disordered. A DNA-binding region (myb-like GARP) is located at residues 189–248 (TVKKARVVWSVDLHQKFVNAVNQIGFDKVGPKKILDLMNVPGLTRENVASHLQKYRLYLS).

It belongs to the ARR family. Type-B subfamily. Two-component system major event consists of a His-to-Asp phosphorelay between a sensor histidine kinase (HK) and a response regulator (RR). In plants, the His-to-Asp phosphorelay involves an additional intermediate named Histidine-containing phosphotransfer protein (HPt). This multistep phosphorelay consists of a His-Asp-His-Asp sequential transfer of a phosphate group between first a His and an Asp of the HK protein, followed by the transfer to a conserved His of the HPt protein and finally the transfer to an Asp in the receiver domain of the RR protein.

The protein resides in the nucleus. Transcriptional activator that binds specific DNA sequence. Functions as a response regulator involved in His-to-Asp phosphorelay signal transduction system. Phosphorylation of the Asp residue in the receiver domain activates the ability of the protein to promote the transcription of target genes. May directly activate some type-A response regulators in response to cytokinins. The sequence is that of Two-component response regulator ORR26 from Oryza sativa subsp. japonica (Rice).